The chain runs to 113 residues: Large ribosomal subunit protein uL22 (113 aa).

The protein belongs to the universal ribosomal protein uL22 family. Part of the 50S ribosomal subunit.

Its function is as follows. This protein binds specifically to 23S rRNA; its binding is stimulated by other ribosomal proteins, e.g. L4, L17, and L20. It is important during the early stages of 50S assembly. It makes multiple contacts with different domains of the 23S rRNA in the assembled 50S subunit and ribosome. The globular domain of the protein is located near the polypeptide exit tunnel on the outside of the subunit, while an extended beta-hairpin is found that lines the wall of the exit tunnel in the center of the 70S ribosome. The sequence is that of Large ribosomal subunit protein uL22 from Carboxydothermus hydrogenoformans (strain ATCC BAA-161 / DSM 6008 / Z-2901).